A 444-amino-acid polypeptide reads, in one-letter code: Probable kynurenine--oxoglutarate transaminase BNA3 (444 aa).

Lys271 bears the N6-(pyridoxal phosphate)lysine mark.

It belongs to the class-I pyridoxal-phosphate-dependent aminotransferase family. Homodimer. Pyridoxal 5'-phosphate is required as a cofactor.

The protein resides in the cytoplasm. Its subcellular location is the mitochondrion. The catalysed reaction is L-kynurenine + 2-oxoglutarate = kynurenate + L-glutamate + H2O. Its pathway is amino-acid degradation; L-kynurenine degradation; kynurenate from L-kynurenine: step 1/2. Catalyzes the irreversible transamination of the L-tryptophan metabolite L-kynurenine to form kynurenic acid (KA). The sequence is that of Probable kynurenine--oxoglutarate transaminase BNA3 (BNA3) from Saccharomyces cerevisiae (strain ATCC 204508 / S288c) (Baker's yeast).